A 596-amino-acid polypeptide reads, in one-letter code: SUN domain-containing protein 4 (596 aa).

A helical transmembrane segment spans residues 28 to 48; that stretch reads VSLSLVFLIWGLVFLSTLWIS. 2 disordered regions span residues 58–98 and 139–158; these read LVDS…LSSD and KQSE…TTGS. Residues 66 to 77 show a composition bias toward acidic residues; that stretch reads EPDDERADETAE. Composition is skewed to polar residues over residues 80-95 and 141-158; these read DATS…NPGL and SEIN…TTGS. The region spanning 179-343 is the SUN domain; sequence SNSRDKSLSG…SLLEVYGVDA (165 aa). The segment covering 366-396 has biased composition (basic and acidic residues); it reads DTEQKEKKTMQAKESFESDEDKSKQKEKEQE. The segment at 366–410 is disordered; sequence DTEQKEKKTMQAKESFESDEDKSKQKEKEQEASPENAVVKDEVSL. Residues 475–544 adopt a coiled-coil conformation; the sequence is ASKREKEVET…LERLEWMEKK (70 aa). The next 2 helical transmembrane spans lie at 545–565 and 576–596; these read GVVV…AVVF and GGLA…ILSL.

In terms of assembly, forms homomers and heteromers with SUN3. Interacts with SUN1, SUN2 and TIK.

The protein resides in the nucleus membrane. The protein localises to the endoplasmic reticulum membrane. Functionally, encodes a member of the mid-SUN subfamily of SUN-domain proteins that is localized to both the nuclear envelope and the ER. It is involved in early seed development and nuclear morphology. [TAIR]. The chain is SUN domain-containing protein 4 from Arabidopsis thaliana (Mouse-ear cress).